A 385-amino-acid polypeptide reads, in one-letter code: Multidrug resistance protein MdtE (385 aa).

The signal sequence occupies residues 1-20 (MNRRRKLLIPLLFCGAMLTA). Residue Cys-21 is the site of N-palmitoyl cysteine attachment. Residue Cys-21 is the site of S-diacylglycerol cysteine attachment.

This sequence belongs to the membrane fusion protein (MFP) (TC 8.A.1) family. In terms of assembly, homotrimer. Part of the tripartite efflux system MdtEF-TolC, which is composed of an inner membrane transporter, MdtF, a membrane fusion protein, MdtE, and an outer membrane component, TolC. The complex forms a large protein conduit and can translocate molecules across both the inner and outer membranes.

Its subcellular location is the cell inner membrane. Part of the tripartite efflux system MdtEF-TolC, which confers resistance to various compounds. The polypeptide is Multidrug resistance protein MdtE (mdtE) (Escherichia coli O6:H1 (strain CFT073 / ATCC 700928 / UPEC)).